Reading from the N-terminus, the 1009-residue chain is Glutamate receptor ionotropic, delta-1 (1009 aa).

The N-terminal stretch at 1–20 (MEALTLWLLPWICQCVTVRA) is a signal peptide. The interaction with CBLN1 stretch occupies residues 21–436 (DSIIHIGAIF…ERPMGSRLQG (416 aa)). Residues 21 to 562 (DSIIHIGAIF…SIFSLFAPFD (542 aa)) lie on the Extracellular side of the membrane. 3 cysteine pairs are disulfide-bonded: C80–C351, C96–C128, and C294–C306. 2 N-linked (GlcNAc...) asparagine glycosylation sites follow: N131 and N200. 2 N-linked (GlcNAc...) asparagine glycosylation sites follow: N422 and N498. Ca(2+) is bound by residues E527, V530, and D531. A helical transmembrane segment spans residues 563–583 (FAVWACIAAAIPVVGVLIFVL). The Cytoplasmic portion of the chain corresponds to 584–637 (NRIQAVRSQSATQPRPSASATLHSAIWIVYGAFVQQGGESSVNSVAMRIVMGSW). Residues 638–658 (WLFTLIVCSSYTANLAAFLTV) form a helical membrane-spanning segment. Residues 659–830 (SRMDNPIRTF…TEGKSLKLHS (172 aa)) lie on the Extracellular side of the membrane. D753, D755, and S757 together coordinate Ca(2+). The chain crosses the membrane as a helical span at residues 831–851 (FAGVFCILAIGLLLACLVAAL). Topologically, residues 852-1009 (ELWWNSNRCH…ALDTSHGTSI (158 aa)) are cytoplasmic. Over residues 931 to 942 (LPEQSSHGTSRT) the composition is skewed to polar residues. The tract at residues 931-960 (LPEQSSHGTSRTLSSGPSSNLPLPLSSSAT) is disordered. The span at 943-958 (LSSGPSSNLPLPLSSS) shows a compositional bias: low complexity.

This sequence belongs to the glutamate-gated ion channel (TC 1.A.10.1) family. GRID1 subfamily. In terms of assembly, homodimer. Interacts (via extracellular N-terminal domain) with CBLN1 (via C1q domain), and more weakly with CBLN2; the interactions mediate the trans-synaptic adhesion complexes also with neurexins and are required for ligand-gated cation channel activity. Equally in forebrain and cerebellum.

The protein resides in the postsynaptic cell membrane. It catalyses the reaction Ca(2+)(in) = Ca(2+)(out). It carries out the reaction Na(+)(in) = Na(+)(out). Its function is as follows. Member of the ionotropic glutamate receptor family, which plays a crucial role in synaptic organization and signal transduction in the central nervous system. Although it shares structural features with ionotropic glutamate receptors, does not bind glutamate as a primary ligand. Instead, forms trans-synaptic adhesion complexes with presynaptic neurexins and cerebellins, regulating NMDA and AMPA receptor activity and influencing synaptic plasticity through signal transduction. In the presence of NRX1B-CBLN1, forms cation-selective channels that are proposed to be gated by glycine and D-serine. However, recent research disputes this ligand-gated cation channel activity. Cation-selective ion channel can be triggered by GRM1 in dopaminergic neurons. Also acts as a receptor for GABA, modulating inhibitory synaptic plasticity through non-ionotropic mechanisms. The sequence is that of Glutamate receptor ionotropic, delta-1 (Grid1) from Mus musculus (Mouse).